Consider the following 914-residue polypeptide: DENN domain-containing protein 2C (914 aa).

The tract at residues 46–98 is disordered; the sequence is FGVRYNCHQESPPHKRPTGEERNGALPRNTDVKSRDQSEDEGEGGECRGSHPS. Basic and acidic residues predominate over residues 56–68; sequence SPPHKRPTGEERN. Serine 261 is modified (phosphoserine). Residues 411-446 form a disordered region; the sequence is GKKRVKLQPYTGKEAPSSKGETSGNESDAEYLPKNR. Residues 480 to 627 enclose the uDENN domain; that stretch reads ELFVVVSLQK…PFPAPGRTIT (148 aa). Residues 649–782 form the cDENN domain; it reads RLEHVDFECL…LQAALVQILE (134 aa). The dDENN domain maps to 784–874; the sequence is RDEVLAQEQQ…QDRELRQSGV (91 aa).

Guanine nucleotide exchange factor (GEF) which may activate RAB9A and RAB9B. Promotes the exchange of GDP to GTP, converting inactive GDP-bound Rab proteins into their active GTP-bound form. The protein is DENN domain-containing protein 2C (Dennd2c) of Mus musculus (Mouse).